The sequence spans 103 residues: Large ribosomal subunit protein bL21 (103 aa).

The protein belongs to the bacterial ribosomal protein bL21 family. In terms of assembly, part of the 50S ribosomal subunit. Contacts protein L20.

Functionally, this protein binds to 23S rRNA in the presence of protein L20. The polypeptide is Large ribosomal subunit protein bL21 (Idiomarina loihiensis (strain ATCC BAA-735 / DSM 15497 / L2-TR)).